A 344-amino-acid chain; its full sequence is tRNA N6-adenosine threonylcarbamoyltransferase (344 aa).

2 residues coordinate Fe cation: histidine 112 and histidine 116. Residues 134 to 138, aspartate 167, glycine 180, and asparagine 280 contribute to the substrate site; that span reads LASGG. A Fe cation-binding site is contributed by aspartate 308.

Belongs to the KAE1 / TsaD family. It depends on Fe(2+) as a cofactor.

It localises to the cytoplasm. It carries out the reaction L-threonylcarbamoyladenylate + adenosine(37) in tRNA = N(6)-L-threonylcarbamoyladenosine(37) in tRNA + AMP + H(+). Required for the formation of a threonylcarbamoyl group on adenosine at position 37 (t(6)A37) in tRNAs that read codons beginning with adenine. Is involved in the transfer of the threonylcarbamoyl moiety of threonylcarbamoyl-AMP (TC-AMP) to the N6 group of A37, together with TsaE and TsaB. TsaD likely plays a direct catalytic role in this reaction. The sequence is that of tRNA N6-adenosine threonylcarbamoyltransferase from Rickettsia conorii (strain ATCC VR-613 / Malish 7).